A 642-amino-acid polypeptide reads, in one-letter code: 1-deoxy-D-xylulose-5-phosphate synthase 2 (642 aa).

Residues H73 and 113 to 115 contribute to the thiamine diphosphate site; that span reads SHA. Mg(2+) is bound at residue D144. Residues 145–146, N174, Y285, and E366 each bind thiamine diphosphate; that span reads GA. Residue N174 coordinates Mg(2+).

This sequence belongs to the transketolase family. DXPS subfamily. Homodimer. Mg(2+) is required as a cofactor. Thiamine diphosphate serves as cofactor.

It carries out the reaction D-glyceraldehyde 3-phosphate + pyruvate + H(+) = 1-deoxy-D-xylulose 5-phosphate + CO2. It functions in the pathway metabolic intermediate biosynthesis; 1-deoxy-D-xylulose 5-phosphate biosynthesis; 1-deoxy-D-xylulose 5-phosphate from D-glyceraldehyde 3-phosphate and pyruvate: step 1/1. Functionally, catalyzes the acyloin condensation reaction between C atoms 2 and 3 of pyruvate and glyceraldehyde 3-phosphate to yield 1-deoxy-D-xylulose-5-phosphate (DXP). In Streptomyces coelicolor (strain ATCC BAA-471 / A3(2) / M145), this protein is 1-deoxy-D-xylulose-5-phosphate synthase 2.